A 512-amino-acid polypeptide reads, in one-letter code: SWI/SNF complex subunit SWI3A (512 aa).

Residues 13–110 (YTIPAQSSWF…FSSSLKKNDH (98 aa)) enclose the SWIRM domain. One can recognise an SANT domain in the interval 223–274 (SAAAVWTEEEILLLLESVLKHGDDWELISQSVSTKSRLDCISKLIELPFGEF). Residues 291 to 325 (DENTEQVQTDGQEHEETETREEKEDRVNEDEPPAK) form a disordered region. The stretch at 424–488 (ALGAAAAQAK…IEGVKETIIQ (65 aa)) forms a coiled coil.

As to quaternary structure, homodimers and heterodimers. Interacts with SWI3B, SWI3C, BSH, and the C-terminus of FCA, but not with BRM or SWI3D. In terms of tissue distribution, expressed in roots, stems, leaves and flowers, but not in siliques.

Its subcellular location is the nucleus. In terms of biological role, component of a multiprotein complex equivalent of the SWI/SNF complex, an ATP-dependent chromatin-remodeling complex, which is required for the positive and negative regulation of gene expression of a large number of genes. It changes chromatin structure by altering DNA-histone contacts within a nucleosome, leading eventually to a change in nucleosome position, thus facilitating or repressing binding of gene-specific transcription factors. This chain is SWI/SNF complex subunit SWI3A (SWI3A), found in Arabidopsis thaliana (Mouse-ear cress).